Reading from the N-terminus, the 107-residue chain is Small ribosomal subunit protein bS16 (107 aa).

Positions 85–107 (REARNNPEKAVPRKERKAAEAGK) are disordered.

The protein belongs to the bacterial ribosomal protein bS16 family.

The sequence is that of Small ribosomal subunit protein bS16 from Rhodopseudomonas palustris (strain BisB5).